A 35-amino-acid polypeptide reads, in one-letter code: Flavodoxin (35 aa).

The Flavodoxin-like domain occupies 4–35 (IGLFYGTZTGKTESVAEIIDEFGDEVVTLDID).

The protein belongs to the flavodoxin family. It depends on FMN as a cofactor.

In terms of biological role, low-potential electron donor to a number of redox enzymes. This chain is Flavodoxin, found in Nostoc sp. (strain MAC).